Consider the following 73-residue polypeptide: Small ribosomal subunit protein bS18c (73 aa).

This sequence belongs to the bacterial ribosomal protein bS18 family. As to quaternary structure, part of the 30S ribosomal subunit.

The protein resides in the plastid. The protein localises to the chloroplast. In Nephroselmis olivacea (Green alga), this protein is Small ribosomal subunit protein bS18c.